The following is a 293-amino-acid chain: 4-diphosphocytidyl-2-C-methyl-D-erythritol kinase (293 aa).

Lysine 16 is an active-site residue. Residue 99–109 participates in ATP binding; that stretch reads PMGAGLGGGSS. Aspartate 141 is an active-site residue.

The protein belongs to the GHMP kinase family. IspE subfamily.

It catalyses the reaction 4-CDP-2-C-methyl-D-erythritol + ATP = 4-CDP-2-C-methyl-D-erythritol 2-phosphate + ADP + H(+). The protein operates within isoprenoid biosynthesis; isopentenyl diphosphate biosynthesis via DXP pathway; isopentenyl diphosphate from 1-deoxy-D-xylulose 5-phosphate: step 3/6. Its function is as follows. Catalyzes the phosphorylation of the position 2 hydroxy group of 4-diphosphocytidyl-2C-methyl-D-erythritol. This Burkholderia ambifaria (strain MC40-6) protein is 4-diphosphocytidyl-2-C-methyl-D-erythritol kinase.